Consider the following 105-residue polypeptide: Large ribosomal subunit protein bL21 (105 aa).

It belongs to the bacterial ribosomal protein bL21 family. In terms of assembly, part of the 50S ribosomal subunit. Contacts protein L20.

This protein binds to 23S rRNA in the presence of protein L20. The sequence is that of Large ribosomal subunit protein bL21 from Rickettsia prowazekii (strain Madrid E).